The following is a 405-amino-acid chain: Amino acid transporter AVT1I (405 aa).

11 helical membrane passes run 22 to 42 (CFNA…YSLA), 46 to 66 (WLSL…SLLI), 93 to 113 (IIVS…FLIL), 140 to 160 (FMAT…LSVL), 169 to 189 (LATT…GIGF), 201 to 221 (IPTA…LPTL), 234 to 254 (VLLI…VLGY), 278 to 298 (VAIY…ITPT), 318 to 338 (LLIS…LPFF), 343 to 363 (SLVG…LCYL), and 377 to 397 (IMLF…TYIA).

This sequence belongs to the amino acid/polyamine transporter 2 family. Amino acid/auxin permease (AAAP) (TC 2.A.18.5) subfamily.

Its subcellular location is the membrane. In Arabidopsis thaliana (Mouse-ear cress), this protein is Amino acid transporter AVT1I.